The sequence spans 350 residues: Twinfilin-1 (350 aa).

The residue at position 2 (serine 2) is an N-acetylserine. The ADF-H 1 domain maps to 2–139 (SHRTGIQASE…SLHGYKKYLL (138 aa)). A phosphoserine mark is found at serine 143 and serine 277. The ADF-H 2 domain maps to 175–313 (LQGVAFPISR…TADFLYEEVH (139 aa)). Position 309 is a phosphotyrosine (tyrosine 309). The tract at residues 316-350 (QHAHKQSFAKPKGPAGKRGIRRLIRGPAETEATTD) is disordered. A Phosphothreonine modification is found at threonine 349.

Belongs to the actin-binding proteins ADF family. Twinfilin subfamily. Interacts with G-actin; ADP-actin form and capping protein (CP). May also be able to interact with TWF2 and phosphoinositides, PI(4,5)P2. When bound to PI(4,5)P2, it is down-regulated. Interacts with ACTG1. In terms of processing, phosphorylated on serine and threonine residues.

It localises to the cytoplasm. Its subcellular location is the cytoskeleton. Actin-binding protein involved in motile and morphological processes. Inhibits actin polymerization, likely by sequestering G-actin. By capping the barbed ends of filaments, it also regulates motility. Seems to play an important role in clathrin-mediated endocytosis and distribution of endocytic organelles. This is Twinfilin-1 (TWF1) from Pongo abelii (Sumatran orangutan).